Reading from the N-terminus, the 446-residue chain is Chromosomal replication initiator protein DnaA (446 aa).

The domain I, interacts with DnaA modulators stretch occupies residues 1 to 72 (MENILDLWNQ…ADTIYELTGE (72 aa)). The domain II stretch occupies residues 72 to 109 (EELSVKFVIPQNQDEENFLPKPQVKKAAKEEPSDFPQS). Residues 110–326 (MLNPKYTFDT…GALIRVVAYS (217 aa)) form a domain III, AAA+ region region. ATP contacts are provided by glycine 154, glycine 156, lysine 157, and threonine 158. Residues 327-446 (SLINKDINAD…QVKEIKELLK (120 aa)) are domain IV, binds dsDNA.

The protein belongs to the DnaA family. Oligomerizes as a right-handed, spiral filament on DNA at oriC.

The protein resides in the cytoplasm. Functionally, plays an essential role in the initiation and regulation of chromosomal replication. ATP-DnaA binds to the origin of replication (oriC) to initiate formation of the DNA replication initiation complex once per cell cycle. Binds the DnaA box (a 9 base pair repeat at the origin) and separates the double-stranded (ds)DNA. Forms a right-handed helical filament on oriC DNA; dsDNA binds to the exterior of the filament while single-stranded (ss)DNA is stabiized in the filament's interior. The ATP-DnaA-oriC complex binds and stabilizes one strand of the AT-rich DNA unwinding element (DUE), permitting loading of DNA polymerase. After initiation quickly degrades to an ADP-DnaA complex that is not apt for DNA replication. Binds acidic phospholipids. The sequence is that of Chromosomal replication initiator protein DnaA from Bacillus velezensis (strain DSM 23117 / BGSC 10A6 / LMG 26770 / FZB42) (Bacillus amyloliquefaciens subsp. plantarum).